Reading from the N-terminus, the 403-residue chain is Tryptophan synthase beta chain 1 (403 aa).

Lysine 93 bears the N6-(pyridoxal phosphate)lysine mark.

Belongs to the TrpB family. As to quaternary structure, tetramer of two alpha and two beta chains. The cofactor is pyridoxal 5'-phosphate.

It carries out the reaction (1S,2R)-1-C-(indol-3-yl)glycerol 3-phosphate + L-serine = D-glyceraldehyde 3-phosphate + L-tryptophan + H2O. It participates in amino-acid biosynthesis; L-tryptophan biosynthesis; L-tryptophan from chorismate: step 5/5. Its function is as follows. The beta subunit is responsible for the synthesis of L-tryptophan from indole and L-serine. This Methanosarcina acetivorans (strain ATCC 35395 / DSM 2834 / JCM 12185 / C2A) protein is Tryptophan synthase beta chain 1 (trpB1).